The sequence spans 220 residues: MAERQKAVAKQEKVTISKRDPWALKKWFAVHAPPYLGGVFLAEVPATEAEKLLMRTLEVSLYDITKDISHLPVKLKFQIHRVEGLRALTRFKGLELSRDYVKSLVRKGTSKVVAITEVKTKDGMDMRVSVMVITAHRLGTAQKSAVRKKITETLLKKASEMDTSQFLKEVLEGTLAADLFIAAKKIAPLRKVEFAKIKVLKYPPEEERVVVKEAVAEAAS.

It belongs to the eukaryotic ribosomal protein eS1 family.

The chain is Small ribosomal subunit protein eS1 from Pyrobaculum arsenaticum (strain DSM 13514 / JCM 11321 / PZ6).